The chain runs to 151 residues: Cell division control protein 2 homolog 2 (151 aa).

The region spanning 1–151 (ALKEIRMDNE…IMQTLQIESL (151 aa)) is the Protein kinase domain. Residue Lys3 participates in ATP binding. The active-site Proton acceptor is the Asp113.

It belongs to the protein kinase superfamily. CMGC Ser/Thr protein kinase family. CDC2/CDKX subfamily.

It carries out the reaction L-seryl-[protein] + ATP = O-phospho-L-seryl-[protein] + ADP + H(+). The enzyme catalyses L-threonyl-[protein] + ATP = O-phospho-L-threonyl-[protein] + ADP + H(+). The catalysed reaction is [DNA-directed RNA polymerase] + ATP = phospho-[DNA-directed RNA polymerase] + ADP + H(+). This chain is Cell division control protein 2 homolog 2, found in Pisum sativum (Garden pea).